Reading from the N-terminus, the 989-residue chain is ATP-dependent 6-phosphofructokinase subunit alpha (989 aa).

The interval 1–585 (MPEPSISDLS…SYENFLSVSK (585 aa)) is N-terminal catalytic PFK domain 1. ATP is bound by residues Gly220, 283 to 284 (RC), and 313 to 316 (GDGS). Asp314 serves as a coordination point for Mg(2+). Beta-D-fructose 6-phosphate-binding positions include 359 to 361 (SID), Arg396, 403 to 405 (MGR), Glu460, Arg487, and 493 to 496 (HVQR). The active-site Proton acceptor is the Asp361. Positions 586–599 (YDDGSYLVPESSRL) are interdomain linker. The tract at residues 600-989 (NIAIIHVGAP…LSGRLSIRTT (390 aa)) is C-terminal regulatory PFK domain 2. Residues Arg670, 727-731 (TVSNN), Arg765, 772-774 (QGG), Glu832, Arg858, 864-867 (HVQQ), and Arg963 each bind beta-D-fructose 2,6-bisphosphate.

This sequence belongs to the phosphofructokinase type A (PFKA) family. ATP-dependent PFK group I subfamily. Eukaryotic two domain clade 'E' sub-subfamily. As to quaternary structure, heterododecamer of 4 alpha, 4 beta and 4 gamma chains. Mg(2+) serves as cofactor.

It is found in the cytoplasm. It carries out the reaction beta-D-fructose 6-phosphate + ATP = beta-D-fructose 1,6-bisphosphate + ADP + H(+). It functions in the pathway carbohydrate degradation; glycolysis; D-glyceraldehyde 3-phosphate and glycerone phosphate from D-glucose: step 3/4. Its activity is regulated as follows. Allosterically activated by ADP, AMP, or fructose 2,6-bisphosphate, and allosterically inhibited by ATP or citrate. Catalyzes the phosphorylation of D-fructose 6-phosphate to fructose 1,6-bisphosphate by ATP, the first committing step of glycolysis. This Komagataella pastoris (Yeast) protein is ATP-dependent 6-phosphofructokinase subunit alpha (PFK1).